Consider the following 331-residue polypeptide: Meiotically up-regulated gene 172 protein (331 aa).

A coiled-coil region spans residues 72–166 (IKNNEYEKQR…KGNYGLVKAR (95 aa)).

It belongs to the ADIP family.

The protein localises to the cytoplasm. Its function is as follows. Has a role in meiosis. The sequence is that of Meiotically up-regulated gene 172 protein (mug172) from Schizosaccharomyces pombe (strain 972 / ATCC 24843) (Fission yeast).